Reading from the N-terminus, the 218-residue chain is Protein-methionine-sulfoxide reductase heme-binding subunit MsrQ (218 aa).

The next 5 helical transmembrane spans lie at 14-34, 60-80, 86-106, 121-141, and 155-175; these read AVHAAVLAPIALLGWQFWQVW, LLLITLAITPLRQLTGQAVLI, LGLYAFFYASVHLTAYLWLDL, PYITVGFTAWLLLVPLAITST, and LHMLIYPIGLLAVLHFWWLVK.

It belongs to the MsrQ family. In terms of assembly, heterodimer of a catalytic subunit (MsrP) and a heme-binding subunit (MsrQ). FMN is required as a cofactor. The cofactor is heme b.

The protein localises to the cell inner membrane. Part of the MsrPQ system that repairs oxidized periplasmic proteins containing methionine sulfoxide residues (Met-O), using respiratory chain electrons. Thus protects these proteins from oxidative-stress damage caused by reactive species of oxygen and chlorine generated by the host defense mechanisms. MsrPQ is essential for the maintenance of envelope integrity under bleach stress, rescuing a wide series of structurally unrelated periplasmic proteins from methionine oxidation. MsrQ provides electrons for reduction to the reductase catalytic subunit MsrP, using the quinone pool of the respiratory chain. This chain is Protein-methionine-sulfoxide reductase heme-binding subunit MsrQ, found in Xanthomonas campestris pv. campestris (strain 8004).